A 198-amino-acid polypeptide reads, in one-letter code: Ribonuclease HII (198 aa).

The region spanning 3-198 is the RNase H type-2 domain; that stretch reads LSVGGIDEAG…SWETVGKLFK (196 aa). Residues D9, E10, and D104 each contribute to the a divalent metal cation site.

The protein belongs to the RNase HII family. Mn(2+) serves as cofactor. It depends on Mg(2+) as a cofactor.

Its subcellular location is the cytoplasm. It catalyses the reaction Endonucleolytic cleavage to 5'-phosphomonoester.. Functionally, endonuclease that specifically degrades the RNA of RNA-DNA hybrids. The chain is Ribonuclease HII from Pyrobaculum arsenaticum (strain DSM 13514 / JCM 11321 / PZ6).